The chain runs to 175 residues: Large ribosomal subunit protein uL6 (175 aa).

Belongs to the universal ribosomal protein uL6 family. In terms of assembly, part of the 50S ribosomal subunit.

Functionally, this protein binds to the 23S rRNA, and is important in its secondary structure. It is located near the subunit interface in the base of the L7/L12 stalk, and near the tRNA binding site of the peptidyltransferase center. In Xanthomonas campestris pv. campestris (strain 8004), this protein is Large ribosomal subunit protein uL6.